Reading from the N-terminus, the 508-residue chain is MATDWLGSIVSINCGDSLGVYQGRVSAVDQVSQTISLTRPFHNGVKCLVPEVTFRAGDITELKILEIPGPGDNQHFGDLHQTELGPSGAGCQVGINQNGTGKFVKKPASSSSAPQNIPKRTDVKSQDVAVSPQQQQCSKSYVDRHMESLSQSKSFRRRHNSWSSSSRHPNQATPKKSGLKNGQMKNKDDECFGDDIEEIPDTDFDFEGNLALFDKAAVFEEIDTYERRSGTRSRGIPNERPTRYRHDENILESEPIVYRRIIVPHNVSKEFCTDSGLVVPSISYELHKKLLSVAEKHGLTLERRLEMTGVCASQMALTLLGGPNRLNPKNVHQRPTVALLCGPHVKGAQGISCGRHLANHDVQVILFLPNFVKMLESITNELSLFSKTQGQQVSSLKDLPTSPVDLVINCLDCPENVFLRDQPWYKAAVAWANQNRAPVLSIDPPVHEVEQGIDAKWSLALGLPLPLGEHAGRIYLCDIGIPQQVFQEVGINYHSPFGCKFVIPLHSA.

Residues 1 to 68 (MATDWLGSIV…ITELKILEIP (68 aa)) form the Sm domain. Residues 1–79 (MATDWLGSIV…PGDNQHFGDL (79 aa)) form a required for P-body targeting and interaction with DCP1A region. Residues 95 to 192 (INQNGTGKFV…QMKNKDDECF (98 aa)) form a disordered region. 4 positions are modified to phosphoserine: serine 131, serine 138, serine 140, and serine 161. Residues 191 to 296 (CFGDDIEEIP…HKKLLSVAEK (106 aa)) form a required for interaction with DDX6 region. One can recognise a DFDF domain in the interval 192–228 (FGDDIEEIPDTDFDFEGNLALFDKAAVFEEIDTYERR). Positions 283-487 (SYELHKKLLS…DIGIPQQVFQ (205 aa)) constitute a YjeF N-terminal domain.

Belongs to the EDC3 family. In terms of assembly, homodimer (via YjeF N-terminal domain). Forms a complex with DCP1A, DCP2, DDX6 and EDC4/HEDLS, within this complex directly interacts with DCP1A and DDX6. Interacts with ZFP36. Expressed in theca and granulosa cells in ovary, and in spermatids of the meiotic division part II and apical membrane of Sertoli cells in testis (at protein level). Also expressed in brain and mammary gland.

The protein localises to the cytoplasm. Its subcellular location is the P-body. Its function is as follows. Binds single-stranded RNA. Involved in the process of mRNA degradation and in the positive regulation of mRNA decapping. May play a role in spermiogenesis and oogenesis. This chain is Enhancer of mRNA-decapping protein 3 (EDC3), found in Homo sapiens (Human).